The primary structure comprises 479 residues: Cardiolipin synthase (479 aa).

A run of 2 helical transmembrane segments spans residues 5–25 and 34–54; these read SLLLGLTFVLNIALAISIIFL and WAWVMVLLFIPILGFFLYLIF. PLD phosphodiesterase domains are found at residues 216–243 and 392–419; these read INYRNHRKLAIIDGYIGYLGGFNVGDEY and QNGFLHAKTIIVDGRIASVGTANIDVRS. Active-site residues include histidine 221, lysine 223, aspartate 228, histidine 397, lysine 399, and aspartate 404.

This sequence belongs to the phospholipase D family. Cardiolipin synthase subfamily.

It localises to the cell membrane. It catalyses the reaction 2 a 1,2-diacyl-sn-glycero-3-phospho-(1'-sn-glycerol) = a cardiolipin + glycerol. In terms of biological role, catalyzes the reversible phosphatidyl group transfer from one phosphatidylglycerol molecule to another to form cardiolipin (CL) (diphosphatidylglycerol) and glycerol. This chain is Cardiolipin synthase (cls), found in Oceanobacillus iheyensis (strain DSM 14371 / CIP 107618 / JCM 11309 / KCTC 3954 / HTE831).